Consider the following 630-residue polypeptide: tRNA uridine 5-carboxymethylaminomethyl modification enzyme MnmG (630 aa).

Residues 13-18 (GGGHAG), Val125, and Ser180 contribute to the FAD site. 273–287 (GPRYCPSIEDKIHRF) serves as a coordination point for NAD(+). Gln370 provides a ligand contact to FAD.

The protein belongs to the MnmG family. Homodimer. Heterotetramer of two MnmE and two MnmG subunits. FAD serves as cofactor.

The protein resides in the cytoplasm. Functionally, NAD-binding protein involved in the addition of a carboxymethylaminomethyl (cmnm) group at the wobble position (U34) of certain tRNAs, forming tRNA-cmnm(5)s(2)U34. In Shewanella woodyi (strain ATCC 51908 / MS32), this protein is tRNA uridine 5-carboxymethylaminomethyl modification enzyme MnmG.